Reading from the N-terminus, the 214-residue chain is Probable GTP-binding protein EngB (214 aa).

Residues 30–204 (EGFEVAFAGR…YTVLAGWMEL (175 aa)) enclose the EngB-type G domain. GTP is bound by residues 38–45 (GRSNAGKS), 64–68 (GRTQL), 82–85 (DLPG), 149–152 (TKAD), and 182–185 (LFSA). The Mg(2+) site is built by S45 and T66.

It belongs to the TRAFAC class TrmE-Era-EngA-EngB-Septin-like GTPase superfamily. EngB GTPase family. Mg(2+) serves as cofactor.

Functionally, necessary for normal cell division and for the maintenance of normal septation. The chain is Probable GTP-binding protein EngB from Pseudomonas fluorescens (strain Pf0-1).